Here is a 356-residue protein sequence, read N- to C-terminus: Histidinol-phosphate aminotransferase (356 aa).

At lysine 208 the chain carries N6-(pyridoxal phosphate)lysine.

This sequence belongs to the class-II pyridoxal-phosphate-dependent aminotransferase family. Histidinol-phosphate aminotransferase subfamily. In terms of assembly, homodimer. Requires pyridoxal 5'-phosphate as cofactor.

It catalyses the reaction L-histidinol phosphate + 2-oxoglutarate = 3-(imidazol-4-yl)-2-oxopropyl phosphate + L-glutamate. The protein operates within amino-acid biosynthesis; L-histidine biosynthesis; L-histidine from 5-phospho-alpha-D-ribose 1-diphosphate: step 7/9. The protein is Histidinol-phosphate aminotransferase of Lactococcus lactis subsp. cremoris (strain MG1363).